The primary structure comprises 166 residues: Cytochrome b (166 aa).

Helical transmembrane passes span Phe-15–Asn-35, Leu-77–Asn-97, Ile-109–Ala-129, and Tyr-136–Leu-156.

Belongs to the cytochrome b family. In terms of assembly, the main subunits of complex b-c1 are: cytochrome b, cytochrome c1 and the Rieske protein. Heme serves as cofactor.

It is found in the mitochondrion inner membrane. Functionally, component of the ubiquinol-cytochrome c reductase complex (complex III or cytochrome b-c1 complex) that is part of the mitochondrial respiratory chain. The b-c1 complex mediates electron transfer from ubiquinol to cytochrome c. Contributes to the generation of a proton gradient across the mitochondrial membrane that is then used for ATP synthesis. The chain is Cytochrome b (mt:Cyt-b) from Drosophila subobscura (Fruit fly).